Reading from the N-terminus, the 95-residue chain is Acyl carrier protein (95 aa).

The region spanning 4–79 is the Carrier domain; sequence KEIFERIEQV…HVMELTLDLV (76 aa). The residue at position 39 (S39) is an O-(pantetheine 4'-phosphoryl)serine.

It belongs to the acyl carrier protein (ACP) family. 4'-phosphopantetheine is transferred from CoA to a specific serine of apo-ACP by AcpS. This modification is essential for activity because fatty acids are bound in thioester linkage to the sulfhydryl of the prosthetic group.

It is found in the cytoplasm. It functions in the pathway lipid metabolism; fatty acid biosynthesis. Carrier of the growing fatty acid chain in fatty acid biosynthesis. This chain is Acyl carrier protein, found in Saccharopolyspora erythraea (strain ATCC 11635 / DSM 40517 / JCM 4748 / NBRC 13426 / NCIMB 8594 / NRRL 2338).